Here is a 611-residue protein sequence, read N- to C-terminus: Dolabella-3,7-dien-18-ol synthase TPS06 (611 aa).

Residues aspartate 363, aspartate 367, aspartate 507, threonine 511, and glutamate 515 each coordinate Mg(2+). The short motif at 363 to 367 (DNTFD) is the DDXXD motif; degenerate element.

It belongs to the terpene synthase family. Tpsa subfamily. It depends on Mg(2+) as a cofactor. Mn(2+) serves as cofactor. In terms of tissue distribution, predominantly expressed in flowers but also in stems, siliques, roots and leaves.

It localises to the cytoplasm. It carries out the reaction (2E,6E,10E)-geranylgeranyl diphosphate + H2O = (3E,7E)-dolabella-3,7-dien-18-ol + diphosphate. It participates in secondary metabolite biosynthesis; terpenoid biosynthesis. Involved in terpene biosynthesis in roots. Possesses sesquiterpene (C15) synthase activity and diterpene (C20) synthase activity in vitro. Possesses dolabella-3,7-dien-18-ol synthase activity in vitro. Catalyzes the formation of dolabella-3,7-dien-18-ol from geranylgeranyl diphosphate. The polypeptide is Dolabella-3,7-dien-18-ol synthase TPS06 (Arabidopsis thaliana (Mouse-ear cress)).